Reading from the N-terminus, the 203-residue chain is Anti-sigma-W factor RsiW (203 aa).

Residues Met1 to Arg86 are Cytoplasmic-facing. Positions 30, 34, and 37 each coordinate Zn(2+). Residues His87–Ser103 form a helical membrane-spanning segment. The Extracellular portion of the chain corresponds to Leu104–Glu203.

The protein belongs to the zinc-associated anti-sigma factor (ZAS) superfamily. Anti-sigma-W factor family. Zn(2+) is required as a cofactor. Post-translationally, is processed by three successive proteolytic events. First, the extracellular region of RsiW is cleaved by PrsW (Site-1 cleavage) in response to cell envelope stresses. Next, it undergoes cleavage at an intramembrane site (Site-2 cleavage) mediated by RasP. This cleavage uncovers a cryptic proteolytic tag with conserved alanine residues in the transmembrane segment, that is recognized mainly by the ClpXP protease, which completely degrades the protein in the cytoplasm and leads to the induction of the sigma-W-controlled genes.

The protein localises to the membrane. In terms of biological role, is the anti-sigma factor for SigW. The presence of RsiW leads to the inactivation of SigW, and its proteolytic destruction to sigma-W activation. The polypeptide is Anti-sigma-W factor RsiW (rsiW) (Geobacillus kaustophilus (strain HTA426)).